A 434-amino-acid polypeptide reads, in one-letter code: Alpha-enolase (434 aa).

The residue at position 2 (Ser2) is an N-acetylserine. Lys5 carries the N6-acetyllysine modification. Residue Ser40 coordinates Mg(2+). Tyr44 is modified (phosphotyrosine). An N6-acetyllysine; alternate modification is found at Lys60. Position 60 is an N6-succinyllysine; alternate (Lys60). 2 positions are modified to N6-acetyllysine: Lys64 and Lys71. An N6-acetyllysine; alternate modification is found at Lys89. Lys89 carries the post-translational modification N6-succinyllysine; alternate. 2 positions are modified to N6-acetyllysine: Lys92 and Lys126. Positions 158 and 167 each coordinate substrate. N6-acetyllysine is present on residues Lys193 and Lys199. Residue Lys202 is modified to N6-acetyllysine; alternate. Lys202 is covalently cross-linked (Glycyl lysine isopeptide (Lys-Gly) (interchain with G-Cter in SUMO2); alternate). The active-site Proton donor is the Glu210. N6-acetyllysine; alternate occurs at positions 228 and 233. Lys228 bears the N6-succinyllysine; alternate mark. An N6-(2-hydroxyisobutyryl)lysine; alternate modification is found at Lys228. At Lys233 the chain carries N6-malonyllysine; alternate. Asp245 serves as a coordination point for Mg(2+). Residue Ser254 is modified to Phosphoserine. At Lys256 the chain carries N6-acetyllysine. Ser263 carries the post-translational modification Phosphoserine. At Lys281 the chain carries N6-acetyllysine; alternate. The residue at position 281 (Lys281) is an N6-(2-hydroxyisobutyryl)lysine; alternate. Tyr287 is modified (phosphotyrosine). Ser291 carries the phosphoserine modification. Residues Glu293 and Asp318 each contribute to the Mg(2+) site. 2 residues coordinate substrate: Glu293 and Asp318. 2 positions are modified to N6-acetyllysine: Lys335 and Lys343. Lys343 acts as the Proton acceptor in catalysis. Substrate-binding positions include 370 to 373 and Lys394; that span reads SHRS. The tract at residues 405 to 434 is required for interaction with PLG; the sequence is AKYNQILRIEEELGSKAKFAGRSFRNPLAK. Residue Lys406 is modified to N6-acetyllysine. Lys420 is modified (N6-acetyllysine; alternate). Residue Lys420 is modified to N6-succinyllysine; alternate. An N6-malonyllysine; alternate modification is found at Lys420.

Belongs to the enolase family. Mammalian enolase is composed of 3 isozyme subunits, alpha, beta and gamma, which can form homodimers or heterodimers which are cell-type and development-specific. ENO1 interacts with PLG in the neuronal plasma membrane and promotes its activation. The C-terminal lysine is required for this binding. Interacts with ENO4 and PGAM2. Interacts with CMTM6. It depends on Mg(2+) as a cofactor. ISGylated. Post-translationally, lysine 2-hydroxyisobutyrylation (Khib) by p300/EP300 activates the phosphopyruvate hydratase activity. As to expression, the alpha/alpha homodimer is expressed in embryo and in most adult tissues. The alpha/beta heterodimer and the beta/beta homodimer are found in striated muscle, and the alpha/gamma heterodimer and the gamma/gamma homodimer in neurons.

The protein localises to the cytoplasm. Its subcellular location is the cell membrane. It carries out the reaction (2R)-2-phosphoglycerate = phosphoenolpyruvate + H2O. The protein operates within carbohydrate degradation; glycolysis; pyruvate from D-glyceraldehyde 3-phosphate: step 4/5. Its function is as follows. Glycolytic enzyme the catalyzes the conversion of 2-phosphoglycerate to phosphoenolpyruvate. In addition to glycolysis, involved in various processes such as growth control, hypoxia tolerance and allergic responses. May also function in the intravascular and pericellular fibrinolytic system due to its ability to serve as a receptor and activator of plasminogen on the cell surface of several cell-types such as leukocytes and neurons. Stimulates immunoglobulin production. The protein is Alpha-enolase (ENO1) of Bos taurus (Bovine).